Consider the following 310-residue polypeptide: GPN-loop GTPase 2 (310 aa).

Residue Ala2 is modified to N-acetylalanine. 19–24 (GSGKTT) is a binding site for GTP. The Gly-Pro-Asn (GPN)-loop; involved in dimer interface motif lies at 76 to 78 (GPN). Residue 178–181 (SKMD) coordinates GTP.

The protein belongs to the GPN-loop GTPase family. In terms of assembly, heterodimers with GPN1 or GPN3. Binds to RNA polymerase II (RNAPII).

Small GTPase required for proper localization of RNA polymerase II and III (RNAPII and RNAPIII). May act at an RNAP assembly step prior to nuclear import. In Bos taurus (Bovine), this protein is GPN-loop GTPase 2 (GPN2).